A 249-amino-acid chain; its full sequence is Probable phosphoglycerate mutase (249 aa).

Substrate is bound by residues Arg-9–Asn-16, Thr-22–Gly-23, Arg-61, Glu-88–Tyr-91, Lys-99, Arg-115–Arg-116, and Gly-184–Asn-185. The Tele-phosphohistidine intermediate role is filled by His-10. The active-site Proton donor/acceptor is the Glu-88.

This sequence belongs to the phosphoglycerate mutase family. BPG-dependent PGAM subfamily. In terms of assembly, homodimer.

The enzyme catalyses (2R)-2-phosphoglycerate = (2R)-3-phosphoglycerate. It catalyses the reaction (2R)-3-phospho-glyceroyl phosphate = (2R)-2,3-bisphosphoglycerate + H(+). Its function is as follows. Catalyzes the interconversion of 2-phosphoglycerate and 3-phosphoglycerate. In Dictyostelium discoideum (Social amoeba), this protein is Probable phosphoglycerate mutase (gpmA).